Reading from the N-terminus, the 449-residue chain is Sensor histidine protein kinase/phosphatase WalK (449 aa).

The Extracellular segment spans residues 1-13 (MLDLLKQTIFTRD). The chain crosses the membrane as a helical span at residues 14–34 (FIFILILLGFILVVTLLLLEN). The HAMP domain occupies 35–87 (RRDNIQLKQINQKVKDLIAGDYSKVLDMQGGSEITNITNNLNDLSEVIRLTQE). The Cytoplasmic portion of the chain corresponds to 35–449 (RRDNIQLKQI…EEVWEDEVED (415 aa)). Positions 92–158 (ESKRLNSILF…YELRDLITQS (67 aa)) constitute a PAS domain. The PAC domain maps to 157–211 (QSPELLLDSQDINGEYLNLRVRFALIRRESGFISGLVAVLHDTTEQEKEERERRL). One can recognise a Histidine kinase domain in the interval 215–435 (NVSHELRTPL…TFTIVLPYDK (221 aa)). H218 is modified (phosphohistidine).

As to quaternary structure, may form homodimers. May interact with serine/threonine-protein kinase StkP; the interaction may play a role in regulating Walk signal transduction. In terms of processing, autophosphorylated.

The protein resides in the membrane. It carries out the reaction ATP + protein L-histidine = ADP + protein N-phospho-L-histidine.. Its function is as follows. Member of the two-component regulatory system WalK/WalR that regulates genes involved in cell wall metabolism. Functions as a sensor protein kinase which is autophosphorylated at a histidine residue and transfers its phosphate group to WalR. In turn, WalR binds to the upstream promoter regions of target genes to positively and negatively regulate their expression. Required to maintain expression of WalRK regulon genes in exponentially growing cells, including peptidoglycan hydrolase pcsB. Phosphorylates WalR and also capable of dephosphorylation of WalR. WalK phosphatase activity is probably involved in preventing cross-talk from PnpS and other non-cognate sensor kinases during exponential growth. May be considered a potential virulence factor. This chain is Sensor histidine protein kinase/phosphatase WalK, found in Streptococcus pneumoniae serotype 2 (strain D39 / NCTC 7466).